We begin with the raw amino-acid sequence, 426 residues long: Neuromedin-U receptor 1 (426 aa).

Topologically, residues 1–65 (MTPLCLNCSV…QTELFMPICA (65 aa)) are extracellular. N-linked (GlcNAc...) asparagine glycans are attached at residues N7, N27, and N41. Residues 66 to 86 (TYLLIFVVGAVGNGLTCLVIL) form a helical membrane-spanning segment. Residues 87 to 97 (RHKAMRTPTNY) lie on the Cytoplasmic side of the membrane. The helical transmembrane segment at 98-118 (YLFSLAVSDLLVLLVGLPLEL) threads the bilayer. Residues 119–138 (YEMWHNYPFLLGVGGCYFRT) lie on the Extracellular side of the membrane. A disulfide bridge links C134 with C219. A helical membrane pass occupies residues 139–161 (LLFEMVCLASVLNVTALSVERYV). Topologically, residues 162–181 (AVVHPLQARSMVTRAHVRRV) are cytoplasmic. A helical membrane pass occupies residues 182-202 (LGAVWGLAMLCSLPNTSLHGI). Over 203 to 235 (RQLHVPCRGPVPDSAVCMLVRPRALYNMVVQTT) the chain is Extracellular. A helical membrane pass occupies residues 236 to 256 (ALLFFCLPMAIMSVLYLLIGL). Residues 257-294 (RLRRERLLLMQEAKGRGSAAARSRYTCRLQQHDRGRRQ) lie on the Cytoplasmic side of the membrane. The helical transmembrane segment at 295–315 (VTKMLFVLVVVFGICWAPFHA) threads the bilayer. Topologically, residues 316 to 338 (DRVMWSVVSQWTDGLHLAFQHVH) are extracellular. Residues 339–359 (VISGIFFYLGSAANPVLYSLM) traverse the membrane as a helical segment. Residues 360-426 (SSRFRETFQE…PEAQQETDPS (67 aa)) are Cytoplasmic-facing.

Belongs to the G-protein coupled receptor 1 family. Expressed in greatest abundance in peripheral organs, particularly in elements of the gastrointestinal and urogenital systems with highest levels in testes. In central nervous system structures express levels are much lower than those seen in peripheral organs. Within the CNS, has been detected in highest abundance in the cerebellum, dorsal root ganglia, hippocampus, and spinal cord.

It localises to the cell membrane. Its function is as follows. Receptor for the neuromedin-U and neuromedin-S neuropeptides. This is Neuromedin-U receptor 1 (NMUR1) from Homo sapiens (Human).